We begin with the raw amino-acid sequence, 742 residues long: Synaptic vesicle glycoprotein 2A (742 aa).

The tract at residues 1–57 (MEEGFRDRAAFIRGAKDIAKEVKKHAAKKVVKGLDRVQDEYSRRSYSRFEEEDDDDD) is interaction with SYT1. Residues 1–169 (MEEGFRDRAA…SHGRFQWTLY (169 aa)) lie on the Cytoplasmic side of the membrane. Basic and acidic residues predominate over residues 40 to 49 (EYSRRSYSRF). Residues 40–144 (EYSRRSYSRF…GRGEAQRRKE (105 aa)) form a disordered region. 2 positions are modified to phosphoserine: S80 and S81. T84 is modified (phosphothreonine). A compositionally biased stretch (gly residues) spans 122–137 (VRGGLSDGEGPPGGRG). S127 carries the phosphoserine modification. Residues 170–190 (FVLGLALMADGVEVFVVGFVL) traverse the membrane as a helical segment. Over 191 to 205 (PSAEKDMCLSDSNKG) the chain is Extracellular. A helical transmembrane segment spans residues 206–226 (MLGLIVYLGMMVGAFLWGGLA). Topologically, residues 227-233 (DRLGRRQ) are cytoplasmic. The chain crosses the membrane as a helical span at residues 234–254 (CLLISLSVNSVFAFFSSFVQG). Over 255–262 (YGTFLFCR) the chain is Extracellular. A helical membrane pass occupies residues 263 to 283 (LLSGVGIGGSIPIVFSYFSEF). Over 284–294 (LAQEKRGEHLS) the chain is Cytoplasmic. The chain crosses the membrane as a helical span at residues 295 to 315 (WLCMFWMIGGVYAAAMAWAII). Topologically, residues 316 to 334 (PHYGWSFQMGSAYQFHSWR) are extracellular. The chain crosses the membrane as a helical span at residues 335-355 (VFVLVCAFPSVFAIGALTTQP). Residues 356–447 (ESPRFFLENG…CFGPEYRRIT (92 aa)) lie on the Cytoplasmic side of the membrane. S393 carries the phosphoserine modification. A helical membrane pass occupies residues 448 to 468 (LMMMGVWFTMSFSYYGLTVWF). At 469–598 (PDMIRHLQAV…GTGEGAYMVY (130 aa)) the chain is on the extracellular side. Residue Y480 is modified to Phosphotyrosine. Residues N498, N548, and N573 are each glycosylated (N-linked (GlcNAc...) asparagine). Residues 599-619 (FVSFLGTLAVLPGNIVSALLM) form a helical membrane-spanning segment. Topologically, residues 620–626 (DKIGRLR) are cytoplasmic. Residues 627-647 (MLAGSSVMSCVSCFFLSFGNS) form a helical membrane-spanning segment. Residues 648 to 651 (ESAM) are Extracellular-facing. A helical transmembrane segment spans residues 652-672 (IALLCLFGGVSIASWNALDVL). The Cytoplasmic portion of the chain corresponds to 673 to 685 (TVELYPSDKRTTA). The chain crosses the membrane as a helical span at residues 686–708 (FGFLNALCKLAAVLGISIFTSFV). Residues 709 to 712 (GITK) are Extracellular-facing. Residues 713-731 (AAPILFASAALALGSSLAL) traverse the membrane as a helical segment. Topologically, residues 732-742 (KLPETRGQVLQ) are cytoplasmic.

The protein belongs to the major facilitator superfamily. As to quaternary structure, interacts with SYT1/synaptotagmin-1 in a calcium-dependent manner. Binds the adapter protein complex AP-2. Post-translationally, phosphorylation by CK1 of the N-terminal cytoplasmic domain regulates interaction with SYT1. N-glycosylated.

It is found in the presynapse. It localises to the cytoplasmic vesicle. Its subcellular location is the secretory vesicle. The protein resides in the synaptic vesicle membrane. Plays a role in the control of regulated secretion in neural and endocrine cells, enhancing selectively low-frequency neurotransmission. Positively regulates vesicle fusion by maintaining the readily releasable pool of secretory vesicles. This is Synaptic vesicle glycoprotein 2A (SV2A) from Pongo abelii (Sumatran orangutan).